A 414-amino-acid chain; its full sequence is Glycogen synthase (414 aa).

This sequence belongs to the glycosyltransferase group 1 family.

The catalysed reaction is [(1-&gt;4)-alpha-D-glucosyl](n) + UDP-alpha-D-glucose = [(1-&gt;4)-alpha-D-glucosyl](n+1) + UDP + H(+). The protein operates within glycan biosynthesis; glycogen biosynthesis. Glucosyltransferase that uses UDP-glucose as the sugar donor to elongate alpha-(1-&gt;4)-glucans. Is involved in the biosynthesis of both 6-O-methylglucosyl lipopolysaccharides (MGLP) and glycogen. May also use ADP-glucose as substrate. The sequence is that of Glycogen synthase from Mycobacterium tuberculosis (strain CDC 1551 / Oshkosh).